Reading from the N-terminus, the 97-residue chain is uncharacterized protein (97 aa).

This is an uncharacterized protein from Geobacillus stearothermophilus (Bacillus stearothermophilus).